The chain runs to 126 residues: Small ribosomal subunit protein uS12 (126 aa).

The residue at position 89 (aspartate 89) is a 3-methylthioaspartic acid.

The protein belongs to the universal ribosomal protein uS12 family. As to quaternary structure, part of the 30S ribosomal subunit. Contacts proteins S8 and S17. May interact with IF1 in the 30S initiation complex.

In terms of biological role, with S4 and S5 plays an important role in translational accuracy. Functionally, interacts with and stabilizes bases of the 16S rRNA that are involved in tRNA selection in the A site and with the mRNA backbone. Located at the interface of the 30S and 50S subunits, it traverses the body of the 30S subunit contacting proteins on the other side and probably holding the rRNA structure together. The combined cluster of proteins S8, S12 and S17 appears to hold together the shoulder and platform of the 30S subunit. The sequence is that of Small ribosomal subunit protein uS12 from Polynucleobacter necessarius subsp. necessarius (strain STIR1).